The primary structure comprises 175 residues: Shikimate kinase (175 aa).

Position 14 to 19 (14 to 19) interacts with ATP; that stretch reads GAGKST. Ser-18 provides a ligand contact to Mg(2+). 3 residues coordinate substrate: Asp-36, Arg-60, and Gly-82. An ATP-binding site is contributed by Arg-120. Substrate is bound at residue Arg-140. Gln-157 contacts ATP.

It belongs to the shikimate kinase family. In terms of assembly, monomer. Requires Mg(2+) as cofactor.

It localises to the cytoplasm. The catalysed reaction is shikimate + ATP = 3-phosphoshikimate + ADP + H(+). It functions in the pathway metabolic intermediate biosynthesis; chorismate biosynthesis; chorismate from D-erythrose 4-phosphate and phosphoenolpyruvate: step 5/7. Its function is as follows. Catalyzes the specific phosphorylation of the 3-hydroxyl group of shikimic acid using ATP as a cosubstrate. The chain is Shikimate kinase from Pasteurella multocida (strain Pm70).